Consider the following 211-residue polypeptide: Adenylate kinase (211 aa).

Position 10–15 (Gly-10–Thr-15) interacts with ATP. The tract at residues Ser-30–Val-59 is NMP. Residues Thr-31, Arg-36, Glu-57 to Val-59, Gly-85 to Arg-88, and Gln-92 contribute to the AMP site. Positions Gly-121–Asp-158 are LID. An ATP-binding site is contributed by Arg-122. Cys-125 and Cys-128 together coordinate Zn(2+). Ile-131 to Phe-132 contributes to the ATP binding site. Zn(2+)-binding residues include Cys-145 and Cys-148. Residues Arg-155 and Arg-166 each contribute to the AMP site. Residue Val-194 coordinates ATP.

Belongs to the adenylate kinase family. Monomer.

It localises to the cytoplasm. The enzyme catalyses AMP + ATP = 2 ADP. It participates in purine metabolism; AMP biosynthesis via salvage pathway; AMP from ADP: step 1/1. Its function is as follows. Catalyzes the reversible transfer of the terminal phosphate group between ATP and AMP. Plays an important role in cellular energy homeostasis and in adenine nucleotide metabolism. This chain is Adenylate kinase, found in Borrelia garinii subsp. bavariensis (strain ATCC BAA-2496 / DSM 23469 / PBi) (Borreliella bavariensis).